The chain runs to 248 residues: Triosephosphate isomerase (248 aa).

9–11 contributes to the substrate binding site; sequence NWK. His-94 acts as the Electrophile in catalysis. Glu-166 acts as the Proton acceptor in catalysis. Substrate-binding positions include Gly-172, Ser-212, and 233–234; that span reads GG.

It belongs to the triosephosphate isomerase family. In terms of assembly, homodimer.

The protein localises to the cytoplasm. It carries out the reaction D-glyceraldehyde 3-phosphate = dihydroxyacetone phosphate. It functions in the pathway carbohydrate biosynthesis; gluconeogenesis. It participates in carbohydrate degradation; glycolysis; D-glyceraldehyde 3-phosphate from glycerone phosphate: step 1/1. Its function is as follows. Involved in the gluconeogenesis. Catalyzes stereospecifically the conversion of dihydroxyacetone phosphate (DHAP) to D-glyceraldehyde-3-phosphate (G3P). The polypeptide is Triosephosphate isomerase (Caldanaerobacter subterraneus subsp. tengcongensis (strain DSM 15242 / JCM 11007 / NBRC 100824 / MB4) (Thermoanaerobacter tengcongensis)).